A 232-amino-acid chain; its full sequence is Ion-translocating oxidoreductase complex subunit E (232 aa).

Helical transmembrane passes span 18–38 (GLVQ…LTNA), 39–59 (LGLG…VSLV), 69–89 (IPVF…LINA), 93–113 (GLYL…IIIG), 127–147 (AAFD…VLGA), and 182–202 (PFLL…LIAL).

Belongs to the NqrDE/RnfAE family. The complex is composed of six subunits: RnfA, RnfB, RnfC, RnfD, RnfE and RnfG.

It is found in the cell inner membrane. Its function is as follows. Part of a membrane-bound complex that couples electron transfer with translocation of ions across the membrane. The protein is Ion-translocating oxidoreductase complex subunit E of Shewanella sp. (strain ANA-3).